A 183-amino-acid polypeptide reads, in one-letter code: Ribulose bisphosphate carboxylase small subunit, chloroplastic 3 (183 aa).

A chloroplast-targeting transit peptide spans 1 to 57 (MASSLMSNAATTMAAATTTAQANMVAPFNGLKSVSAFPVTRKNNDITSVASNGGRVQ).

It belongs to the RuBisCO small chain family. Heterohexadecamer of 8 large and 8 small subunits.

It is found in the plastid. The protein localises to the chloroplast. RuBisCO catalyzes two reactions: the carboxylation of D-ribulose 1,5-bisphosphate, the primary event in carbon dioxide fixation, as well as the oxidative fragmentation of the pentose substrate. Both reactions occur simultaneously and in competition at the same active site. Although the small subunit is not catalytic it is essential for maximal activity. This is Ribulose bisphosphate carboxylase small subunit, chloroplastic 3 from Mesembryanthemum crystallinum (Common ice plant).